We begin with the raw amino-acid sequence, 694 residues long: MIHRTNYQQLRIGLASPEQIRSWAERELPNGDVIGQVDQPYTLHYKTHKPERDGLFCERIFGPTKSGVCACGNCRSVNDEGESSRFCKHCGVEFTDSRVRRYRMGYIKLACPVTHVWFLKRIPSYIANLLAKPLKELESLVYCDLFLARPVAERPALLRLRGLFNYEDRAWRNILPTFFSTQNYEMLRKNEIVTGGDAIREGLASLDLQSFLNCAYLEWQASVKQKPVGIEWEDRTIRRRKDLLIRRIKLAKDFLRTNMKPEWMVLYFIPVLPPELRPIVELHEGELITSDLNELYRKIIYRNNTLREFLSGSEFTPEGLIVCQKRLVQEAVDALIGSGIRGQPMRDIHNRPYKSFSEVIEGKEGRFRENLLGKRVDYSGRSVIVVGPSLSLHQCGLPREMAIELFQAFVIRNLIGRHLACNLRAAKCMIRKGNPIIWEVLREVMRGHPVLLNRAPTLHRLGIQAFQPLLIEGRAIRLHPLVRGGFNADFDGDQMAVHVPLSVEAQIEARLLMFSHLNLLSPATGDPVSVPSQDMLLGLYALTIESRQGIYRNRHLGFIDRVNVYSTKLLHFSSYCDLLRAKESRQVDSHSLLWLRWKIDLQIISSKIRELSSESHYESSGTSFHFYENCRIRKCRDGSISSMYVLTTAGRILFNQQLKEAMQGVSKNSFSYTTSSTLSTSTIDRCNTNSNNEE.

Zn(2+) is bound by residues Cys69, Cys71, Cys87, and Cys90. 3 residues coordinate Mg(2+): Asp489, Asp491, and Asp493.

Belongs to the RNA polymerase beta' chain family. RpoC1 subfamily. In plastids the minimal PEP RNA polymerase catalytic core is composed of four subunits: alpha, beta, beta', and beta''. When a (nuclear-encoded) sigma factor is associated with the core the holoenzyme is formed, which can initiate transcription. It depends on Mg(2+) as a cofactor. Zn(2+) is required as a cofactor.

The protein localises to the plastid. It localises to the chloroplast. It carries out the reaction RNA(n) + a ribonucleoside 5'-triphosphate = RNA(n+1) + diphosphate. DNA-dependent RNA polymerase catalyzes the transcription of DNA into RNA using the four ribonucleoside triphosphates as substrates. This is DNA-directed RNA polymerase subunit beta' from Adiantum capillus-veneris (Maidenhair fern).